The following is a 1069-amino-acid chain: Protogenin B (1069 aa).

The signal sequence occupies residues 1 to 26 (MGSVRWKTHQQWLIIFWILSFSGVFG). Over 27–936 (FSELWFSIEP…LYHIDEKSMS (910 aa)) the chain is Extracellular. 4 Ig-like domains span residues 30 to 117 (LWFS…ARLT), 122 to 208 (LVFS…AELV), 221 to 308 (PLII…GNVT), and 312 to 396 (PSLV…SRLI). 2 disulfide bridges follow: C51/C100 and C143/C191. Residues N81, N88, N180, and N229 are each glycosylated (N-linked (GlcNAc...) asparagine). A disulfide bridge connects residues C242 and C290. N-linked (GlcNAc...) asparagine glycans are attached at residues N299 and N306. Positions 317-336 (KPESQTRPRAGTARFSCQAE) are disordered. A disulfide bridge links C333 with C380. 5 consecutive Fibronectin type-III domains span residues 406 to 500 (APRN…TLED), 502 to 601 (PLRT…TPKT), 608 to 701 (PAPN…CPST), 711 to 804 (PPDH…TLLE), and 809 to 904 (PPES…VKGK). N-linked (GlcNAc...) asparagine glycans are attached at residues N458, N473, and N560. Residues 590–605 (PSAWSSHRTPKTSSAT) are compositionally biased toward polar residues. Residues 590 to 609 (PSAWSSHRTPKTSSATVPPA) are disordered. N618, N720, and N834 each carry an N-linked (GlcNAc...) asparagine glycan. Residues 937–957 (GIIVGVCIALSCIILCIFILL) traverse the membrane as a helical segment. Topologically, residues 958–1069 (SKTQTQKSAS…KTVLCYEDEA (112 aa)) are cytoplasmic.

This sequence belongs to the immunoglobulin superfamily. DCC family. In terms of tissue distribution, initially expressed in the ventral forebrain and ventral spinal cord. Later, also expressed in the midbrain and in parts of the diencephalon and hindbrain.

The protein localises to the membrane. In terms of biological role, may play a role in anteroposterior axis elongation. This chain is Protogenin B, found in Danio rerio (Zebrafish).